We begin with the raw amino-acid sequence, 360 residues long: C-X-C chemokine receptor type 2 (360 aa).

The Extracellular portion of the chain corresponds to 1-48 (MEDFNMESDSFEDFWKGEDLSNYSYSSTLPPFLLDAAPCEPESLEINK). An N-linked (GlcNAc...) asparagine glycan is attached at Asn22. Residues 49–75 (YFVVIIYALVFLLSLLGNSLVMLVILY) form a helical membrane-spanning segment. Over 76-84 (SRVGRSVTD) the chain is Cytoplasmic. The helical transmembrane segment at 85 to 105 (VYLLNLALADLLFALTLPIWA) threads the bilayer. The Extracellular segment spans residues 106 to 120 (ASKVNGWIFGTFLCK). Cys119 and Cys196 are joined by a disulfide. The helical transmembrane segment at 121-142 (VVSLLKEVNFYSGILLLACISV) threads the bilayer. Residues 143–163 (DRYLAIVHATRTLTQKRYLVK) are Cytoplasmic-facing. A helical membrane pass occupies residues 164-183 (FICLSIWGLSLLLALPVLLF). At 184–208 (RRTVYSSNVSPACYEDMGNNTANWR) the chain is on the extracellular side. The chain crosses the membrane as a helical span at residues 209–231 (MLLRILPQSFGFIVPLLIMLFCY). At 232 to 251 (GFTLRTLFKAHMGQKHRAMR) the chain is on the cytoplasmic side. The chain crosses the membrane as a helical span at residues 252 to 273 (VIFAVVLIFLLCWLPYNLVLLA). Residues 274–294 (DTLMRTQVIQETCERRNHIDR) are Extracellular-facing. The chain crosses the membrane as a helical span at residues 295-315 (ALDATEILGILHSCLNPLIYA). The Cytoplasmic segment spans residues 316 to 360 (FIGQKFRHGLLKILAIHGLISKDSLPKDSRPSFVGSSSGHTSTTL). Residues Ser347, Ser351, Ser352, and Ser353 each carry the phosphoserine modification.

This sequence belongs to the G-protein coupled receptor 1 family. Interacts with IL8. Interacts with GNAI2. In terms of processing, phosphorylated upon ligand binding; which is required for desensitization. Post-translationally, (Microbial infection) Proteolytically cleaved by Staphylococcus aureus staphopain A/SspP. This cleavage inhibits CXCR2-dependent neutrophil activation and chemotaxis.

The protein localises to the cell membrane. Receptor for interleukin-8 which is a powerful neutrophil chemotactic factor. Binding of IL-8 to the receptor causes activation of neutrophils. This response is mediated via a G-protein that activates a phosphatidylinositol-calcium second messenger system. Binds to IL-8 with high affinity. Also binds with high affinity to CXCL3, GRO/MGSA and NAP-2. The polypeptide is C-X-C chemokine receptor type 2 (CXCR2) (Homo sapiens (Human)).